We begin with the raw amino-acid sequence, 258 residues long: Serine protease sp-Eoc49 (258 aa).

The first 18 residues, 1-18, serve as a signal peptide directing secretion; that stretch reads MVLIRVLANLLVLQLSYA. A Peptidase S1 domain is found at 25 to 249; that stretch reads VVGGGECNRN…YTDWIQSIIA (225 aa). N-linked (GlcNAc...) asparagine glycosylation occurs at Asn44. Cys50 and Cys66 are oxidised to a cystine. The Charge relay system role is filled by His65. Residues Asn79 and Asn103 are each glycosylated (N-linked (GlcNAc...) asparagine). The active-site Charge relay system is Asp110. 3 cysteine pairs are disulfide-bonded: Cys142-Cys210, Cys174-Cys189, and Cys200-Cys225. N-linked (GlcNAc...) asparagine glycosylation is present at Asn154. Ser204 serves as the catalytic Charge relay system. N-linked (GlcNAc...) asparagine glycosylation is present at Asn251.

This sequence belongs to the peptidase S1 family. Snake venom subfamily. As to quaternary structure, monomer. In terms of tissue distribution, expressed by the venom gland.

The protein localises to the secreted. Its function is as follows. Snake venom serine protease that may act in the hemostasis system of the prey. The protein is Serine protease sp-Eoc49 of Echis ocellatus (Ocellated saw-scaled viper).